The sequence spans 377 residues: Guanine nucleotide-binding protein subunit alpha-13 (377 aa).

2 S-palmitoyl cysteine lipidation sites follow: Cys14 and Cys18. A G-alpha domain is found at 47–377 (RLVKILLLGA…HDNLKQLMLQ (331 aa)). The segment at 50–63 (KILLLGAGESGKST) is G1 motif. Residues 58-63 (ESGKST), Ser173, and 197-200 (LLAR) each bind GTP. Residue Ser62 coordinates Mg(2+). The segment at 195 to 203 (DILLARRPT) is G2 motif. Thr203 is a Mg(2+) binding site. Phosphothreonine; by PKA is present on Thr203. A G3 motif region spans residues 218–227 (FKMVDVGGQR). Positions 287-294 (ILFLNKTD) are G4 motif. GTP contacts are provided by residues 291–294 (NKTD) and Ala349. The segment at 347–352 (TTAINT) is G5 motif.

Belongs to the G-alpha family. G(12) subfamily. As to quaternary structure, g proteins are composed of 3 units; alpha, beta and gamma. The alpha chain contains the guanine nucleotide binding site. Interacts with UBXD5. Interacts with HAX1. Interacts (in GTP-bound form) with PPP5C (via TPR repeats); activates PPP5C phosphatase activity and translocates PPP5C to the cell membrane. Interacts with RGS22. Interacts (in GTP-bound form) with ARHGEF1. Interacts (in GTP-bound form) with ARHGEF11 (via RGS domain). Interacts (in GTP-bound form) with ARHGEF12 (via RGS domain). Interacts with CTNND1. Interacts with GASL2L2. Interacts with GPR35. Interacts with GPR174. In terms of processing, palmitoylation is critical for proper membrane localization and signaling. Post-translationally, phosphorylation on Thr-203 by PKA destabilizes the heterotrimer of alpha, beta and gamma, and inhibits Rho activation. As to expression, expressed in testis, including in Leydig cells and in the seminiferous epithelium, in differentiating cells from the spermatogonia to mature spermatozoa stages and round spermatids (at protein level). Expressed in 99.2% of spermatozoa from healthy individuals, but only in 28.6% of macrocephalic spermatozoa from infertile patients (at protein level).

The protein localises to the cell membrane. Its subcellular location is the melanosome. The protein resides in the cytoplasm. It localises to the nucleus. Its function is as follows. Guanine nucleotide-binding proteins (G proteins) are involved as modulators or transducers in various transmembrane signaling systems. Activates effector molecule RhoA by binding and activating RhoGEFs (ARHGEF1/p115RhoGEF, ARHGEF11/PDZ-RhoGEF and ARHGEF12/LARG). GNA13-dependent Rho signaling subsequently regulates transcription factor AP-1 (activating protein-1). Promotes tumor cell invasion and metastasis by activating RhoA/ROCK signaling pathway. Inhibits CDH1-mediated cell adhesion in a process independent from Rho activation. In lymphoid follicles, transmits P2RY8- and S1PR2-dependent signals that lead to inhibition of germinal center (GC) B cell growth and migration outside the GC niche. The protein is Guanine nucleotide-binding protein subunit alpha-13 (GNA13) of Homo sapiens (Human).